The sequence spans 97 residues: Class II hydrophobin 1 (97 aa).

An N-terminal signal peptide occupies residues Met-1–Ala-16. Residues Gln-17–Arg-22 constitute a propeptide that is removed on maturation. Cystine bridges form between Cys-30–Cys-79, Cys-40–Cys-70, Cys-41–Cys-53, and Cys-80–Cys-91.

The protein belongs to the cerato-ulmin hydrophobin family. In terms of assembly, homotetramer. Further self-assembles to form highly ordered films at water-air interfaces through intermolecular interactions.

It localises to the secreted. It is found in the cell wall. In terms of biological role, aerial growth, conidiation, and dispersal of filamentous fungi in the environment rely upon a capability of their secreting small amphipathic proteins called hydrophobins (HPBs) with low sequence identity. Class I can self-assemble into an outermost layer of rodlet bundles on aerial cell surfaces, conferring cellular hydrophobicity that supports fungal growth, development and dispersal; whereas Class II form highly ordered films at water-air interfaces through intermolecular interactions but contribute nothing to the rodlet structure. Hbf1 is a class II hydrophobin that has a role in hyphal development and is in particular required for the formation of aerial hyphae. This Hypocrea jecorina (Trichoderma reesei) protein is Class II hydrophobin 1.